Consider the following 1053-residue polypeptide: Serine/threonine-protein phosphatase 6 regulatory ankyrin repeat subunit A (1053 aa).

ANK repeat units follow at residues 40–69 (EKRTPLHAAAYLGDAEIIELLILSGARVNA), 73–102 (KWLTPLHRAVASCSEEAVQILLKHSADVNA), 106–135 (NWQTPLHIAAANKAVKCAESLVPLLSNVNV), 139–168 (AGRTALHHAAFSGHGEMVKLLLSRGANINA), 172–201 (KDRRAIHWAAYMGHIEVVKLLVSHGAEVTC), 205–234 (KSYTPLHAAASSGMISVVKYLLDLGVDMNE), 238–267 (YGNTPLHVACYNGQDVVVNELIDCGANVNQ), 271–301 (KGFTPLHFAAASTHGALCLELLVGNGADVNM), 305–334 (DGKTPLHMTALHGRFSRSQTIIQSGAVIDC), 338–367 (NGNTPLHIAARYGHELLINTLITSGADTAK), 371–400 (HGMFPLHLAALSGFSDCCRKLLSSGFDIDT), 404–433 (FGRTCLHAAAAGGNLECLNLLLNTGADFNK), 437–466 (FGRSPLHYAAANCNYQCLFALVGSGASVND), 470–500 (RGCTPLHYAATSDTDGKCLEYLLRNDANPGI), 504–534 (QGYNAVHYSAAYGHRLCLQLIASETPLDVLM), 549–578 (ATISPLHLAAYHGHHQALEVLVQSLLDLDV), 582–611 (SGRTPLDLAAFKGHVECVDVLINQGASILV), 616–645 (LKRTPIHAAATNGHSECLRLLIGNAEPQNA), 652–681 (NGQTPLMLSVLNGHTDCVYSLLNKGANVDA), 685–714 (WGRTALHRGAVTGHEECVDALLQHGAKCLL), 718–747 (RGRTPIHLSAACGHIGVLGALLQSATSVDA), 755–786 (HGYTALHWACYNGHETCVELLLEQDVFQKIDG), 788–817 (AFSPLHCAVINDNEGAAEMLIDSLGASIVN), 822–851 (KGRTPLHAAAFTDHVECLQLLLSQNAQVNS), 855–885 (TGKTPLMMAAENGQTNTVEMLVSSASADLTL), 889–918 (SKNTALHLACGKGHETSALLILEKITDRNL), and 925–954 (ALQTPLHVAARNGLTMVVQELLGKGASVLA). Residues Ser-1007 and Ser-1011 each carry the phosphoserine modification.

As to quaternary structure, protein phosphatase 6 (PP6) holoenzyme is proposed to be a heterotrimeric complex formed by the catalytic subunit, a SAPS domain-containing subunit (PP6R) and an ankyrin repeat-domain containing regulatory subunit (ARS). Interacts with PPP1C and HNRPK. Interacts with PPP6C, PPP6R1 and PPP6R3. Post-translationally, ubiquitinated by the ECS(RAB40C) complex leading to its degradation and decreased PP6 activity. Widely expressed (at protein level).

It localises to the nucleus. Its subcellular location is the nucleoplasm. It is found in the cytoplasm. The protein localises to the cytosol. The protein resides in the cell projection. It localises to the lamellipodium. Putative regulatory subunit of protein phosphatase 6 (PP6) that may be involved in the recognition of phosphoprotein substrates. Involved in the PP6-mediated dephosphorylation of NFKBIE opposing its degradation in response to TNF-alpha. Selectively inhibits the phosphatase activity of PPP1C. Targets PPP1C to modulate HNRPK phosphorylation. Involved in the PP6-mediated dephosphorylation of MOB1 and induced focal adhesion assembly during cell migration. In Mus musculus (Mouse), this protein is Serine/threonine-protein phosphatase 6 regulatory ankyrin repeat subunit A (Ankrd28).